Reading from the N-terminus, the 159-residue chain is MNISIISIGKLKEKYLKQGIAEYLKRLSSYAKVEVIELPDEKAPENLSAAEMLIVKEKEGIRILDKISDDTHVIALAIEGKQKSSEEFAVSIDRLATYGKSKITFVIGGSLGLSSEVMKRSNESLSFSKMTLPHQLMRLVLLEQVYRAFRINRGEPYHK.

S-adenosyl-L-methionine contacts are provided by residues leucine 76, glycine 108, and 127 to 132 (FSKMTL).

The protein belongs to the RNA methyltransferase RlmH family. As to quaternary structure, homodimer.

Its subcellular location is the cytoplasm. The catalysed reaction is pseudouridine(1915) in 23S rRNA + S-adenosyl-L-methionine = N(3)-methylpseudouridine(1915) in 23S rRNA + S-adenosyl-L-homocysteine + H(+). In terms of biological role, specifically methylates the pseudouridine at position 1915 (m3Psi1915) in 23S rRNA. The protein is Ribosomal RNA large subunit methyltransferase H of Bacillus mycoides (strain KBAB4) (Bacillus weihenstephanensis).